The chain runs to 291 residues: Putative GATA transcription factor 13 (291 aa).

The GATA-type zinc-finger motif lies at 187-241 (KSRRLKCTHCETTTTPQWREGPNGRKTLCNACGIRFRSGRLVLEYRPAASPTFIP). The tract at residues 271–291 (TSGPETRSRLRNFGRPMSYGQ) is disordered.

The protein belongs to the type IV zinc-finger family. Class A subfamily.

It is found in the nucleus. In terms of biological role, transcriptional activator that specifically binds 5'-GATA-3' or 5'-GAT-3' motifs within gene promoters. May be involved in the regulation of some light-responsive genes. The protein is Putative GATA transcription factor 13 (GATA13) of Arabidopsis thaliana (Mouse-ear cress).